The chain runs to 326 residues: NADH-quinone oxidoreductase subunit H (326 aa).

8 helical membrane-spanning segments follow: residues isoleucine 11–phenylalanine 31, valine 81–valine 101, isoleucine 114–glycine 134, leucine 154–phenylalanine 174, leucine 186–valine 206, phenylalanine 237–phenylalanine 257, leucine 265–isoleucine 285, and tryptophan 302–tryptophan 322.

The protein belongs to the complex I subunit 1 family. NDH-1 is composed of 13 different subunits. Subunits NuoA, H, J, K, L, M, N constitute the membrane sector of the complex.

It is found in the cell inner membrane. The catalysed reaction is a quinone + NADH + 5 H(+)(in) = a quinol + NAD(+) + 4 H(+)(out). In terms of biological role, NDH-1 shuttles electrons from NADH, via FMN and iron-sulfur (Fe-S) centers, to quinones in the respiratory chain. The immediate electron acceptor for the enzyme in this species is believed to be ubiquinone. Couples the redox reaction to proton translocation (for every two electrons transferred, four hydrogen ions are translocated across the cytoplasmic membrane), and thus conserves the redox energy in a proton gradient. This subunit may bind ubiquinone. The sequence is that of NADH-quinone oxidoreductase subunit H from Cronobacter sakazakii (strain ATCC BAA-894) (Enterobacter sakazakii).